Consider the following 424-residue polypeptide: CinA-like protein (424 aa).

The protein belongs to the CinA family.

The chain is CinA-like protein from Nostoc sp. (strain PCC 7120 / SAG 25.82 / UTEX 2576).